A 155-amino-acid polypeptide reads, in one-letter code: Small ribosomal subunit protein uS7 (155 aa).

It belongs to the universal ribosomal protein uS7 family. Part of the 30S ribosomal subunit. Contacts proteins S9 and S11.

In terms of biological role, one of the primary rRNA binding proteins, it binds directly to 16S rRNA where it nucleates assembly of the head domain of the 30S subunit. Is located at the subunit interface close to the decoding center, probably blocks exit of the E-site tRNA. The polypeptide is Small ribosomal subunit protein uS7 (Corynebacterium glutamicum (strain R)).